The primary structure comprises 408 residues: uncharacterized protein (408 aa).

Residues 56–76 (YWAGPAAASMVAAVTPYVAWL) form a helical membrane-spanning segment.

It belongs to the mycobacterial PPE family.

It is found in the cell membrane. This is an uncharacterized protein from Mycobacterium bovis (strain ATCC BAA-935 / AF2122/97).